The sequence spans 446 residues: UDP-N-acetylmuramate--L-alanine ligase (446 aa).

ATP is bound at residue 122–128; the sequence is GTHGKTT.

This sequence belongs to the MurCDEF family.

The protein resides in the cytoplasm. It catalyses the reaction UDP-N-acetyl-alpha-D-muramate + L-alanine + ATP = UDP-N-acetyl-alpha-D-muramoyl-L-alanine + ADP + phosphate + H(+). It functions in the pathway cell wall biogenesis; peptidoglycan biosynthesis. In terms of biological role, cell wall formation. In Nocardioides sp. (strain ATCC BAA-499 / JS614), this protein is UDP-N-acetylmuramate--L-alanine ligase.